A 280-amino-acid chain; its full sequence is Feruloyl esterase 1 (280 aa).

Residues 1 to 20 (MKAFATRALAFSVAAGQALA) form the signal peptide. 3 cysteine pairs are disulfide-bonded: C49–C278, C111–C114, and C247–C254. An N-linked (GlcNAc...) asparagine glycan is attached at N99. Catalysis depends on S153, which acts as the Nucleophile. The Charge relay system role is filled by D214. Residue H267 is the Charge relay system of the active site.

It belongs to the AB hydrolase superfamily. FaeA family. Post-translationally, glycosylated.

It is found in the secreted. It catalyses the reaction feruloyl-polysaccharide + H2O = ferulate + polysaccharide.. Its activity is regulated as follows. Metal or basic ions Mn(2+), Ni(+), Mg(2+), and NH(4)(+) decrease the activity by 4.4% to 14.1%. The enzymatic activity is inhibited by Zn(2+) at a low concentration (1 mM) but not a high concentration (5 mM). Loses about a quarter of activity by the addition of 1 mM of Cu(2+) or Fe(3+) and activity is completely suppressed when the concentration was up to 5 mM. Low concentrations (0.25 and 0.5 M) of NaCl improve the activity by 5.6 % or 8.3%, respectively. In terms of biological role, involved in degradation of plant cell walls. Hydrolyzes the feruloyl-arabinose ester bond in arabinoxylans, and the feruloyl-galactose ester bond in pectin. This is Feruloyl esterase 1 from Penicillium parvum (Eupenicillium parvum).